Here is a 164-residue protein sequence, read N- to C-terminus: Phosphopantetheine adenylyltransferase (164 aa).

Serine 9 is a binding site for substrate. Residues 9–10 (SF) and histidine 17 contribute to the ATP site. Substrate is bound by residues lysine 41, leucine 73, and lysine 87. Residues 88 to 90 (GLR), glutamate 98, and 122 to 128 (YSYLSSS) each bind ATP.

The protein belongs to the bacterial CoaD family. As to quaternary structure, homohexamer. Mg(2+) is required as a cofactor.

The protein resides in the cytoplasm. It catalyses the reaction (R)-4'-phosphopantetheine + ATP + H(+) = 3'-dephospho-CoA + diphosphate. Its pathway is cofactor biosynthesis; coenzyme A biosynthesis; CoA from (R)-pantothenate: step 4/5. Reversibly transfers an adenylyl group from ATP to 4'-phosphopantetheine, yielding dephospho-CoA (dPCoA) and pyrophosphate. This is Phosphopantetheine adenylyltransferase from Rhodococcus opacus (strain B4).